Here is a 270-residue protein sequence, read N- to C-terminus: Thiazole synthase (270 aa).

Lys-112 (schiff-base intermediate with DXP) is an active-site residue. Residues Gly-173, 199 to 200 (AG), and 221 to 222 (NS) contribute to the 1-deoxy-D-xylulose 5-phosphate site.

The protein belongs to the ThiG family. In terms of assembly, homotetramer. Forms heterodimers with either ThiH or ThiS.

The protein localises to the cytoplasm. The catalysed reaction is [ThiS sulfur-carrier protein]-C-terminal-Gly-aminoethanethioate + 2-iminoacetate + 1-deoxy-D-xylulose 5-phosphate = [ThiS sulfur-carrier protein]-C-terminal Gly-Gly + 2-[(2R,5Z)-2-carboxy-4-methylthiazol-5(2H)-ylidene]ethyl phosphate + 2 H2O + H(+). Its pathway is cofactor biosynthesis; thiamine diphosphate biosynthesis. Functionally, catalyzes the rearrangement of 1-deoxy-D-xylulose 5-phosphate (DXP) to produce the thiazole phosphate moiety of thiamine. Sulfur is provided by the thiocarboxylate moiety of the carrier protein ThiS. In vitro, sulfur can be provided by H(2)S. This Pseudomonas entomophila (strain L48) protein is Thiazole synthase.